Here is a 73-residue protein sequence, read N- to C-terminus: Translation initiation factor IF-1 (73 aa).

The S1-like domain maps to 1 to 72; it reads MAKEDVIEVE…SRGRITYRYR (72 aa).

This sequence belongs to the IF-1 family. As to quaternary structure, component of the 30S ribosomal translation pre-initiation complex which assembles on the 30S ribosome in the order IF-2 and IF-3, IF-1 and N-formylmethionyl-tRNA(fMet); mRNA recruitment can occur at any time during PIC assembly.

The protein resides in the cytoplasm. Its function is as follows. One of the essential components for the initiation of protein synthesis. Stabilizes the binding of IF-2 and IF-3 on the 30S subunit to which N-formylmethionyl-tRNA(fMet) subsequently binds. Helps modulate mRNA selection, yielding the 30S pre-initiation complex (PIC). Upon addition of the 50S ribosomal subunit IF-1, IF-2 and IF-3 are released leaving the mature 70S translation initiation complex. The sequence is that of Translation initiation factor IF-1 from Rubrobacter xylanophilus (strain DSM 9941 / JCM 11954 / NBRC 16129 / PRD-1).